We begin with the raw amino-acid sequence, 643 residues long: Inner kinetochore subunit cnp3 (643 aa).

Disordered regions lie at residues 55-209 (SIHL…AFPD) and 224-386 (SIKD…QSDS). 2 stretches are compositionally biased toward low complexity: residues 85 to 97 (AASD…SSSD) and 104 to 125 (DIPS…GSSG). Positions 166 to 185 (DFSRIKASPDRKKFEPRRST) are enriched in basic and acidic residues. Composition is skewed to polar residues over residues 235-261 (YIQT…PSKQ), 295-304 (LNRSLANNSQ), and 313-322 (KPLQESSINS). 2 stretches are compositionally biased toward basic residues: residues 332–341 (VKRKRGRPRK) and 360–370 (GAKKPAIRNAK). The a.T hook DNA-binding region spans 333–345 (KRKRGRPRKNKLE).

The protein belongs to the CENP-C/MIF2 family. In terms of assembly, component of the inner kinetochore constitutive centromere-associated network (CCAN) (also known as central kinetochore Sim4 complex in fission yeast), which is composed of at least cnl2, cnp3, cnp20, fta1, fta2, fta3, fta4, fta6, fta7, mal2, mhf1, mhf2, mis6, mis15, mis17, sim4 and wip1.

The protein resides in the nucleus. It localises to the nucleoplasm. Its function is as follows. Component of the kinetochore, a multiprotein complex that assembles on centromeric DNA and attaches chromosomes to spindle microtubules, mediating chromosome segregation and sister chromatid segregation during meiosis and mitosis. Component of the inner kinetochore constitutive centromere-associated network (CCAN), which serves as a structural platform for outer kinetochore assembly. The protein is Inner kinetochore subunit cnp3 (cnp3) of Schizosaccharomyces pombe (strain 972 / ATCC 24843) (Fission yeast).